The sequence spans 635 residues: Sodium-dependent multivitamin transporter (635 aa).

Helical transmembrane passes span 24-44 (FSIMDYVVFVLLLVLSLAIGL), 68-88 (CLPVALSLLATFQSAVAILGV), and 101-121 (FLGCCYFLGLLIPAHIFIPVF). N-linked (GlcNAc...) asparagine glycosylation occurs at Asn138. The next 9 helical transmembrane spans lie at 143–163 (VCGTVTFIFQMVIYMGVVLYA), 176–196 (LWLSVLALGIVCTVYTALGGL), 199–219 (VIWTDVFQTLVMFLGQLAVII), 256–276 (FWTLAFGGVFMMLSLYGVNQA), 297–317 (VFPFQQVSLCVGCLIGLVMFA), 336–356 (FVLYFVMDLLKGLPGLPGLFI), 396–416 (IMLSRGLAFGYGLLCLGMAYI), 428–448 (ISIFGMVGGPLLGLFCLGMFF), and 456–476 (AVVGLLAGLVMAFWIGIGSIV). Asn489 and Asn498 each carry an N-linked (GlcNAc...) asparagine glycan. Residues 528-548 (LWYSAHNSTTVIVVGLIVSLL) form a helical membrane-spanning segment.

It belongs to the sodium:solute symporter (SSF) (TC 2.A.21) family. As to quaternary structure, interacts with PDZD11. May be glycosylated. Expressed in microvessels of the brain (at protein level). Expressed in heart, brain, placenta, lung, liver, skeletal muscle, kidney, and pancreas.

It is found in the cell membrane. The protein resides in the apical cell membrane. The catalysed reaction is biotin(out) + 2 Na(+)(out) = biotin(in) + 2 Na(+)(in). It carries out the reaction (R)-pantothenate(out) + 2 Na(+)(out) = (R)-pantothenate(in) + 2 Na(+)(in). It catalyses the reaction (R)-lipoate(out) + 2 Na(+)(out) = (R)-lipoate(in) + 2 Na(+)(in). The enzyme catalyses iodide(out) + 2 Na(+)(out) = iodide(in) + 2 Na(+)(in). Its function is as follows. Sodium-dependent multivitamin transporter that mediates the electrogenic transport of pantothenate, biotin, lipoate and iodide. Functions as a Na(+)-coupled substrate symporter where the stoichiometry of Na(+):substrate is 2:1, creating an electrochemical Na(+) gradient used as driving force for substrate uptake. Required for biotin and pantothenate uptake in the intestine across the brush border membrane. Plays a role in the maintenance of intestinal mucosa integrity, by providing the gut mucosa with biotin. Contributes to the luminal uptake of biotin and pantothenate into the brain across the blood-brain barrier. The chain is Sodium-dependent multivitamin transporter from Homo sapiens (Human).